The primary structure comprises 493 residues: Ribose import ATP-binding protein RbsA (493 aa).

2 consecutive ABC transporter domains span residues 5-241 and 252-491; these read LKIS…VGRR and EKGE…AAAI. 37–44 contributes to the ATP binding site; sequence GENGAGKS.

This sequence belongs to the ABC transporter superfamily. Ribose importer (TC 3.A.1.2.1) family. As to quaternary structure, the complex is composed of an ATP-binding protein (RbsA), two transmembrane proteins (RbsC) and a solute-binding protein (RbsB).

It is found in the cell inner membrane. It catalyses the reaction D-ribose(out) + ATP + H2O = D-ribose(in) + ADP + phosphate + H(+). Its function is as follows. Part of the ABC transporter complex RbsABC involved in ribose import. Responsible for energy coupling to the transport system. This chain is Ribose import ATP-binding protein RbsA, found in Haemophilus influenzae (strain 86-028NP).